A 210-amino-acid chain; its full sequence is Large ribosomal subunit protein uL3 (210 aa).

It belongs to the universal ribosomal protein uL3 family. In terms of assembly, part of the 50S ribosomal subunit. Forms a cluster with proteins L14 and L19.

One of the primary rRNA binding proteins, it binds directly near the 3'-end of the 23S rRNA, where it nucleates assembly of the 50S subunit. The chain is Large ribosomal subunit protein uL3 from Geobacter sulfurreducens (strain ATCC 51573 / DSM 12127 / PCA).